A 239-amino-acid polypeptide reads, in one-letter code: Trimethylguanosine synthase (239 aa).

This sequence belongs to the methyltransferase superfamily. Trimethylguanosine synthase family. Monomer. Interacts with mug174; both proteins are required to maintain Cajal body integrity.

The protein localises to the nucleus. Its subcellular location is the cajal body. The catalysed reaction is a 5'-end (N(7)-methyl 5'-triphosphoguanosine)-ribonucleoside in snRNA + S-adenosyl-L-methionine = a 5'-end (N(2),N(7)-dimethyl 5'-triphosphoguanosine)-ribonucleoside in snRNA + S-adenosyl-L-homocysteine + H(+). The enzyme catalyses a 5'-end (N(7)-methyl 5'-triphosphoguanosine)-ribonucleoside in snoRNA + S-adenosyl-L-methionine = a 5'-end (N(2),N(7)-dimethyl 5'-triphosphoguanosine)-ribonucleoside in snoRNA + S-adenosyl-L-homocysteine + H(+). It catalyses the reaction a 5'-end (N(2),N(7)-dimethyl 5'-triphosphoguanosine)-ribonucleoside in snRNA + S-adenosyl-L-methionine = a 5'-end (N(2),N(2),N(7)-trimethyl 5'-triphosphoguanosine)-ribonucleoside in snRNA + S-adenosyl-L-homocysteine + H(+). It carries out the reaction a 5'-end (N(2),N(7)-dimethyl 5'-triphosphoguanosine)-ribonucleoside in snoRNA + S-adenosyl-L-methionine = a 5'-end (N(2),N(2),N(7)-trimethyl 5'-triphosphoguanosine)-ribonucleoside in snoRNA + S-adenosyl-L-homocysteine + H(+). With respect to regulation, substrate inhibited by S-adenosyl-L-homocysteine. Functionally, catalyzes the two serial methylation steps for the conversion of the 7-monomethylguanosine (m(7)G) caps of snRNAs and snoRNAs to a 2,2,7-trimethylguanosine (m(2,2,7)G) cap structure. The enzyme is specific for guanine, and N7 methylation must precede N2 methylation. Required for pre-mRNA splicing, pre-rRNA processing and small ribosomal subunit synthesis. Involved in nucleolar structural organization. The sequence is that of Trimethylguanosine synthase (tgs1) from Schizosaccharomyces pombe (strain 972 / ATCC 24843) (Fission yeast).